We begin with the raw amino-acid sequence, 252 residues long: tRNA (guanine-N(1)-)-methyltransferase (252 aa).

S-adenosyl-L-methionine-binding positions include Gly113 and 133–138; that span reads LGDYVL.

Belongs to the RNA methyltransferase TrmD family. In terms of assembly, homodimer.

It localises to the cytoplasm. The enzyme catalyses guanosine(37) in tRNA + S-adenosyl-L-methionine = N(1)-methylguanosine(37) in tRNA + S-adenosyl-L-homocysteine + H(+). In terms of biological role, specifically methylates guanosine-37 in various tRNAs. This is tRNA (guanine-N(1)-)-methyltransferase from Stenotrophomonas maltophilia (strain R551-3).